The chain runs to 399 residues: Ribose-phosphate pyrophosphokinase 2, chloroplastic (399 aa).

The transit peptide at 1-32 (MAAKAAALSSSPFVSSRRLSSPAASLRARTPR) directs the protein to the chloroplast. The Mg(2+) site is built by Asp-214, His-216, Asp-225, and Asp-229. Positions 299–314 (GKVAIMVDDMIDTAGT) are binding of phosphoribosylpyrophosphate.

It belongs to the ribose-phosphate pyrophosphokinase family. Mg(2+) serves as cofactor.

It localises to the plastid. It is found in the chloroplast. It carries out the reaction D-ribose 5-phosphate + ATP = 5-phospho-alpha-D-ribose 1-diphosphate + AMP + H(+). This Oryza sativa subsp. japonica (Rice) protein is Ribose-phosphate pyrophosphokinase 2, chloroplastic.